The following is a 297-amino-acid chain: MVEVRVPATSANIGPGFDCLGVAVNIYNKFFVEEIEDGLIFEGCADKFKNENNLIYVAMKKCFDKIGYKPTGLRIKIESDIPVSRGLGSSAACVVGGIVSANELAGGALNKKELLDLAVEVEGHPDNVNPAFCGGMTASISDNREVIYSKVKVSEGIKFCALIPDFTLSTEKARAVLPKSIDYKDGIFNVGRTALMISALNNGDFHLIKYACKDKLHQDYRAKLIENFYSIKKQCEKLNSLGVFLSGAGPTIMVMLREEDKDFSKNIKSFLETLKNKWEVRELKIDKLGTVVNNRKL.

Residue 82–92 (PVSRGLGSSAA) participates in ATP binding.

This sequence belongs to the GHMP kinase family. Homoserine kinase subfamily.

It localises to the cytoplasm. It carries out the reaction L-homoserine + ATP = O-phospho-L-homoserine + ADP + H(+). The protein operates within amino-acid biosynthesis; L-threonine biosynthesis; L-threonine from L-aspartate: step 4/5. In terms of biological role, catalyzes the ATP-dependent phosphorylation of L-homoserine to L-homoserine phosphate. This chain is Homoserine kinase, found in Clostridium botulinum (strain Okra / Type B1).